Here is a 325-residue protein sequence, read N- to C-terminus: tRNA N6-adenosine threonylcarbamoyltransferase (325 aa).

Fe cation is bound by residues histidine 107, histidine 111, and tyrosine 127. Residues tyrosine 127–glycine 131, aspartate 159, glycine 172, glutamate 176, and asparagine 257 each bind substrate. Aspartate 285 provides a ligand contact to Fe cation.

This sequence belongs to the KAE1 / TsaD family. Monomer. Component of the KEOPS complex that consists of Kae1, Bud32, Cgi121 and Pcc1; the whole complex dimerizes. Fe(2+) serves as cofactor.

It is found in the cytoplasm. It carries out the reaction L-threonylcarbamoyladenylate + adenosine(37) in tRNA = N(6)-L-threonylcarbamoyladenosine(37) in tRNA + AMP + H(+). In terms of biological role, required for the formation of a threonylcarbamoyl group on adenosine at position 37 (t(6)A37) in tRNAs that read codons beginning with adenine. Is a component of the KEOPS complex that is probably involved in the transfer of the threonylcarbamoyl moiety of threonylcarbamoyl-AMP (TC-AMP) to the N6 group of A37. Kae1 likely plays a direct catalytic role in this reaction, but requires other protein(s) of the complex to fulfill this activity. This Thermococcus kodakarensis (strain ATCC BAA-918 / JCM 12380 / KOD1) (Pyrococcus kodakaraensis (strain KOD1)) protein is tRNA N6-adenosine threonylcarbamoyltransferase.